Consider the following 379-residue polypeptide: UDP-N-acetylglucosamine--N-acetylmuramyl-(pentapeptide) pyrophosphoryl-undecaprenol N-acetylglucosamine transferase (379 aa).

UDP-N-acetyl-alpha-D-glucosamine-binding positions include 17 to 19 (TGG), N128, R169, S197, and Q298.

It belongs to the glycosyltransferase 28 family. MurG subfamily.

The protein localises to the cell inner membrane. The enzyme catalyses di-trans,octa-cis-undecaprenyl diphospho-N-acetyl-alpha-D-muramoyl-L-alanyl-D-glutamyl-meso-2,6-diaminopimeloyl-D-alanyl-D-alanine + UDP-N-acetyl-alpha-D-glucosamine = di-trans,octa-cis-undecaprenyl diphospho-[N-acetyl-alpha-D-glucosaminyl-(1-&gt;4)]-N-acetyl-alpha-D-muramoyl-L-alanyl-D-glutamyl-meso-2,6-diaminopimeloyl-D-alanyl-D-alanine + UDP + H(+). It participates in cell wall biogenesis; peptidoglycan biosynthesis. Functionally, cell wall formation. Catalyzes the transfer of a GlcNAc subunit on undecaprenyl-pyrophosphoryl-MurNAc-pentapeptide (lipid intermediate I) to form undecaprenyl-pyrophosphoryl-MurNAc-(pentapeptide)GlcNAc (lipid intermediate II). The protein is UDP-N-acetylglucosamine--N-acetylmuramyl-(pentapeptide) pyrophosphoryl-undecaprenol N-acetylglucosamine transferase of Brucella abortus (strain S19).